The sequence spans 295 residues: Universal stress protein Mb2028c (295 aa).

ATP contacts are provided by residues Gly13, 117 to 123 (GSSGRGA), 131 to 132 (SV), Gly165, Asp198, 262 to 268 (GSHGRGG), and 276 to 278 (SVS).

The protein belongs to the universal stress protein A family.

The sequence is that of Universal stress protein Mb2028c from Mycobacterium bovis (strain ATCC BAA-935 / AF2122/97).